We begin with the raw amino-acid sequence, 155 residues long: Probable methanogenesis regulatory protein FilR2 (155 aa).

In terms of domain architecture, Response regulatory spans 18-142 (IILLVEDNNA…DLKRTVEEIK (125 aa)). Residue D75 is modified to 4-aspartylphosphate.

Phosphorylated by FilI.

Member of the two-component regulatory system FilI/FilRs, which is involved in the regulation of methanogenesis. This is Probable methanogenesis regulatory protein FilR2 from Methanothrix harundinacea (strain 6Ac) (Methanosaeta harundinacea).